The sequence spans 312 residues: Coproporphyrin III ferrochelatase (312 aa).

Fe-coproporphyrin III is bound by residues Tyr-13, Arg-30, 46-47, Ser-54, and Tyr-125; that span reads RY. Positions 182 and 263 each coordinate Fe(2+).

It belongs to the ferrochelatase family.

Its subcellular location is the cytoplasm. It catalyses the reaction Fe-coproporphyrin III + 2 H(+) = coproporphyrin III + Fe(2+). Its pathway is porphyrin-containing compound metabolism; protoheme biosynthesis. Involved in coproporphyrin-dependent heme b biosynthesis. Catalyzes the insertion of ferrous iron into coproporphyrin III to form Fe-coproporphyrin III. The sequence is that of Coproporphyrin III ferrochelatase from Oceanobacillus iheyensis (strain DSM 14371 / CIP 107618 / JCM 11309 / KCTC 3954 / HTE831).